The following is a 422-amino-acid chain: uncharacterized protein (422 aa).

An RRM domain is found at 5-83; that stretch reads CVVYVGNIPY…RRLRVDFPTA (79 aa). Residues 337–358 form a disordered region; the sequence is RSSSIPSSGSIRSPSLTTTSAQ.

The protein resides in the nucleus. This is an uncharacterized protein from Schizosaccharomyces pombe (strain 972 / ATCC 24843) (Fission yeast).